Reading from the N-terminus, the 1076-residue chain is ESX secretion system protein YueB (1076 aa).

Residues isoleucine 9–isoleucine 29 traverse the membrane as a helical segment. 2 disordered regions span residues arginine 372–aspartate 404 and isoleucine 423–isoleucine 552. The span at isoleucine 423–threonine 439 shows a compositional bias: basic and acidic residues. Polar residues-rich tracts occupy residues aspartate 449–threonine 495 and serine 503–aspartate 522. Residues isoleucine 552–asparagine 622 are a coiled coil. A run of 5 helical transmembrane segments spans residues threonine 904–phenylalanine 924, alanine 938–isoleucine 958, aspartate 964–isoleucine 984, glycine 995–methionine 1015, and threonine 1040–isoleucine 1060.

It belongs to the EsaA family.

The protein resides in the cell membrane. Its function is as follows. Required for YukE secretion. Probable component or regulator of the ESX/ESAT-6-like secretion system (BsEss). Bacteriophage SPP1 receptor. Essential for the irreversible adsorption of the bacteriophage. In Bacillus subtilis (strain 168), this protein is ESX secretion system protein YueB (yueB).